A 278-amino-acid polypeptide reads, in one-letter code: Large ribosomal subunit protein uL2 (278 aa).

2 disordered regions span residues 27–58 (STPEKSLVRPLHGKGGRNAHGRITTRHKGGGH) and 224–278 (VVMN…GKKR). A compositionally biased stretch (basic residues) spans 37-58 (LHGKGGRNAHGRITTRHKGGGH). Basic and acidic residues predominate over residues 253 to 268 (PEGRTRKPNKPSDKLI). Residues 269 to 278 (VRRRRTGKKR) show a composition bias toward basic residues.

This sequence belongs to the universal ribosomal protein uL2 family. Part of the 50S ribosomal subunit. Forms a bridge to the 30S subunit in the 70S ribosome.

One of the primary rRNA binding proteins. Required for association of the 30S and 50S subunits to form the 70S ribosome, for tRNA binding and peptide bond formation. It has been suggested to have peptidyltransferase activity; this is somewhat controversial. Makes several contacts with the 16S rRNA in the 70S ribosome. This chain is Large ribosomal subunit protein uL2, found in Mycobacterium sp. (strain KMS).